Here is a 71-residue protein sequence, read N- to C-terminus: Small ribosomal subunit protein bS21 (71 aa).

Belongs to the bacterial ribosomal protein bS21 family.

The sequence is that of Small ribosomal subunit protein bS21 from Hydrogenovibrio crunogenus (strain DSM 25203 / XCL-2) (Thiomicrospira crunogena).